The following is a 285-amino-acid chain: Thrombin-like enzyme TLBm (285 aa).

Residues 1-273 enclose the Peptidase S1 domain; the sequence is VIGGDECNIN…HLDWSQSVIA (273 aa). Cystine bridges form between cysteine 7/cysteine 181, cysteine 30/cysteine 46, cysteine 94/cysteine 284, cysteine 156/cysteine 234, cysteine 192/cysteine 209, and cysteine 224/cysteine 249. Residues histidine 45 and aspartate 113 each act as charge relay system in the active site. Serine 228 functions as the Charge relay system in the catalytic mechanism.

This sequence belongs to the peptidase S1 family. Snake venom subfamily. In terms of assembly, monomer. Homologous thrombin-like enzymes are N-glycosylated. This enzyme does not contain the consensus glycosylation sites, suggesting it is not glycosylated. Expressed by the venom gland.

The protein localises to the secreted. Its activity is regulated as follows. Inhibited by PMSF, disodium-EDTA, S(Dm) and soybean trypsin inhibitor (SBTI). SBTI and S(Dm) (the anti-hemorrhagic protein) acts as a non-competitive inhibitors that decrease the enzymatic activity. Thrombin-like enzyme that induces the formation of fibrin clot. Cleaves the Aalpha-chain of fibrinogen (FGA) with higher activity than the Bbeta-chain (FGB). Induces platelet aggregation in both platelet-rich plasma and in washed platelet preparations. This aggregation is strongly inhibited by preincubation of the enzyme with PMSF. The sequence is that of Thrombin-like enzyme TLBm from Bothrops marajoensis (Marajo lancehead).